The primary structure comprises 168 residues: CS3 fimbrial subunit A (168 aa).

The first 22 residues, 1-22, serve as a signal peptide directing secretion; that stretch reads MLKIKYLLIGLSLSAMSSYSLA.

A longer minor form, starting at amino acid 15, has been detected by amino acid sequencing. This is probably due to alternative processing of the signal peptide.

Its subcellular location is the fimbrium. Fimbriae (also called pili), polar filaments radiating from the surface of the bacterium to a length of 0.5-1.5 micrometers and numbering 100-300 per cell, enable bacteria to colonize the epithelium of specific host organs. The chain is CS3 fimbrial subunit A from Escherichia coli.